The following is a 195-amino-acid chain: Capsid protein (195 aa).

Residues 148-195 (NAPILSTLPETTVVRRRGRSPRRRTPSPRRRRSQSPRRRRSASPASQC) form a disordered region. A compositionally biased stretch (basic residues) spans 161–188 (VRRRGRSPRRRTPSPRRRRSQSPRRRRS). Phosphoserine; by host is present on residues Ser167, Ser174, and Ser182. The stretch at 167-172 (SPRRRT) is one 1; half-length repeat. The 3 X 7 AA repeats of S-P-R-R-R-[PR]-S stretch occupies residues 167–188 (SPRRRTPSPRRRRSQSPRRRRS). A Bipartite nuclear localization signal motif is present at residues 170–187 (RRTPSPRRRRSQSPRRRR). 2 consecutive repeat copies span residues 174–180 (SPRRRRS) and 182–188 (SPRRRRS). The segment at 189–195 (ASPASQC) is RNA binding.

Belongs to the orthohepadnavirus core antigen family. In terms of assembly, homodimerizes, then multimerizes. Interacts with cytosol exposed regions of viral L glycoprotein present in the reticulum-to-Golgi compartment. Interacts with human FLNB. Phosphorylated form interacts with host importin alpha; this interaction depends on the exposure of the NLS, which itself depends upon genome maturation and/or phosphorylation of the capsid protein. Interacts with host NUP153. In terms of processing, phosphorylated by host SRPK1, SRPK2, and maybe protein kinase C or GAPDH. Phosphorylation is critical for pregenomic RNA packaging. Protein kinase C phosphorylation is stimulated by HBx protein and may play a role in transport of the viral genome to the nucleus at the late step during the viral replication cycle.

The protein localises to the virion. It is found in the host cytoplasm. Functionally, self assembles to form an icosahedral capsid. Most capsids appear to be large particles with an icosahedral symmetry of T=4 and consist of 240 copies of capsid protein, though a fraction forms smaller T=3 particles consisting of 180 capsid proteins. Entering capsids are transported along microtubules to the nucleus. Phosphorylation of the capsid is thought to induce exposure of nuclear localization signal in the C-terminal portion of the capsid protein that allows binding to the nuclear pore complex via the importin (karyopherin-) alpha and beta. Capsids are imported in intact form through the nuclear pore into the nuclear basket, where it probably binds NUP153. Only capsids that contain the mature viral genome can release the viral DNA and capsid protein into the nucleoplasm. Immature capsids get stuck in the basket. Capsids encapsulate the pre-genomic RNA and the P protein. Pre-genomic RNA is reverse-transcribed into DNA while the capsid is still in the cytoplasm. The capsid can then either be directed to the nucleus, providing more genomes for transcription, or bud through the endoplasmic reticulum to provide new virions. The sequence is that of Capsid protein from Hepatitis B virus genotype G (isolate IG29227/2000) (HBV-G).